Consider the following 596-residue polypeptide: Fructan 1-exohydrolase w2 (596 aa).

The first 20 residues, 1–20, serve as a signal peptide directing secretion; that stretch reads MAQAWAFLLPVLVLGSYVTS. D75 is an active-site residue. N-linked (GlcNAc...) asparagine glycans are attached at residues N168, N236, and N248. A disulfide bridge links C446 with C492. An N-linked (GlcNAc...) asparagine glycan is attached at N567.

Belongs to the glycosyl hydrolase 32 family.

The catalysed reaction is Hydrolysis of terminal, non-reducing (2-&gt;1)-linked beta-D-fructofuranose residues in fructans.. Inhibited by sucrose. In terms of biological role, hydrolyzes inulin-type beta-(2,1)-fructans, but not beta-(2,1)-linkages in branched fructans. Has low activity against beta-(2,6)-linked fructans. May play a role as a beta-(2,1)-trimmer during graminan biosynthesis. This is Fructan 1-exohydrolase w2 from Triticum aestivum (Wheat).